We begin with the raw amino-acid sequence, 395 residues long: Elongation factor Tu (395 aa).

A tr-type G domain is found at 10–204 (KPHVNIGTIG…VVDEYIPTPV (195 aa)). Residues 19-26 (GHVDHGKT) are G1. 19–26 (GHVDHGKT) contacts GTP. A Mg(2+)-binding site is contributed by Thr26. The tract at residues 60-64 (GITIN) is G2. Positions 81–84 (DAPG) are G3. Residues 81–85 (DAPGH) and 136–139 (NKTD) each bind GTP. Residues 136–139 (NKTD) are G4. Residues 174 to 176 (SAL) form a G5 region.

The protein belongs to the TRAFAC class translation factor GTPase superfamily. Classic translation factor GTPase family. EF-Tu/EF-1A subfamily. As to quaternary structure, monomer.

The protein resides in the cytoplasm. The catalysed reaction is GTP + H2O = GDP + phosphate + H(+). Functionally, GTP hydrolase that promotes the GTP-dependent binding of aminoacyl-tRNA to the A-site of ribosomes during protein biosynthesis. This is Elongation factor Tu from Lactiplantibacillus plantarum (strain ATCC BAA-793 / NCIMB 8826 / WCFS1) (Lactobacillus plantarum).